The chain runs to 312 residues: Olfactory receptor 10D3 (312 aa).

At 1–26 (MEIKNCSVVTEFILLGIPHTEGFETL) the chain is on the extracellular side. N-linked (GlcNAc...) asparagine glycosylation is present at Asn5. A helical membrane pass occupies residues 27–47 (LFVLFLPFYACTLVGNVSILV). Topologically, residues 48–57 (AVISSTRLHT) are cytoplasmic. A helical membrane pass occupies residues 58 to 78 (PMYFFLGNLSVFDMGFSSVTC). Residues 79 to 97 (PKMLFYLMGLSRLISYQDC) lie on the Extracellular side of the membrane. Cys97 and Cys179 are joined by a disulfide. A helical membrane pass occupies residues 98 to 118 (VSQLFFFHFLGSIECFLYTVM). Over 119-139 (AYDRFAAICHPLRYSVIMNSK) the chain is Cytoplasmic. A helical transmembrane segment spans residues 140 to 160 (ICVALAVGTWLLGCFHSSVLT). The Extracellular portion of the chain corresponds to 161-197 (SLTFTLPYCGPNEVDHFFCDIPAILPLASADTSLAQR). The chain crosses the membrane as a helical span at residues 198 to 218 (VSFTNVGLVSLVCFLLILLSY). The Cytoplasmic portion of the chain corresponds to 219 to 239 (TRITISILSIQSTEGRQRAFS). Residues 240–260 (TCSAHLIAILCAYGPIITIYL) traverse the membrane as a helical segment. The Extracellular segment spans residues 261 to 266 (QPTPNP). Residues 267–287 (MLGTVVQILMNLVGPMLNPLI) traverse the membrane as a helical segment. Topologically, residues 288–312 (YTLRNKEVKIALKKILHGKGSVSEG) are cytoplasmic.

This sequence belongs to the G-protein coupled receptor 1 family.

The protein resides in the cell membrane. Potential odorant receptor. This chain is Olfactory receptor 10D3, found in Mus musculus (Mouse).